Reading from the N-terminus, the 111-residue chain is IPGGLSPRDVTDPDVQEAAAFAVEKYNAGSKNDYYFKERRVVEAQSQVVSGVKYYLMMELLKTTCKKTVGRPKGYQEIQNCNLPPENQQEEITCRFEVWSRPWLPSTSLTK.

One can recognise a Cystatin domain in the interval 3–103; the sequence is GGLSPRDVTD…CRFEVWSRPW (101 aa). Positions 47 to 51 match the Secondary area of contact motif; it reads QVVSG. The cysteines at positions 65 and 81 are disulfide-linked.

Belongs to the cystatin family. Expressed by the venom gland.

Its subcellular location is the secreted. Functionally, inhibits various C1 cysteine proteases including cathepsin L, papain and cathepsin B. This protein has no toxic activity and its function in the venom is unknown. It may play a role as housekeeping or regulatory protein. The chain is Cystatin from Bitis arietans (African puff adder).